The following is an 877-amino-acid chain: Phosphoenolpyruvate carboxylase (877 aa).

Active-site residues include H137 and K544.

This sequence belongs to the PEPCase type 1 family. Mg(2+) serves as cofactor.

The catalysed reaction is oxaloacetate + phosphate = phosphoenolpyruvate + hydrogencarbonate. Its function is as follows. Forms oxaloacetate, a four-carbon dicarboxylic acid source for the tricarboxylic acid cycle. This Edwardsiella ictaluri (strain 93-146) protein is Phosphoenolpyruvate carboxylase.